A 467-amino-acid polypeptide reads, in one-letter code: Argininosuccinate lyase (467 aa).

It belongs to the lyase 1 family. Argininosuccinate lyase subfamily.

The protein resides in the cytoplasm. It carries out the reaction 2-(N(omega)-L-arginino)succinate = fumarate + L-arginine. It participates in amino-acid biosynthesis; L-arginine biosynthesis; L-arginine from L-ornithine and carbamoyl phosphate: step 3/3. This Methylibium petroleiphilum (strain ATCC BAA-1232 / LMG 22953 / PM1) protein is Argininosuccinate lyase.